A 343-amino-acid polypeptide reads, in one-letter code: MTNFYKVFLAVFILVCCNISHAVVSFIGSTENDVGPSQGSYSSTHAMDNLPFVYNTGYNIGYQNANVWRIGGGFCVGLDGKVDLPVVGSLDGQSIYGLTEEVGLLIWMGDTNYSRGTAMSGNSWENVFSGWCVGNYLSTQGLSVHVRPVILKRNSSAQYSVQKTSIGSIRMRPYNGSSAGSVQTTVNFSLNPFTLNDTVTSCRLLTPSAVNVSLAAISAGQLPSSGDEVVAGTTSLKLQCDAGVTVWATLTDATTPSNRSDILTLTGASTATGVGLRIYKNTDSTPLKFGPDSPVKGNENQWQLSTGTETSPSVRLYVKYVNTGEGINPGTVNGISTFTFSYQ.

A signal peptide spans 1–22 (MTNFYKVFLAVFILVCCNISHA). The tract at residues 23–199 (VVSFIGSTEN…LNPFTLNDTV (177 aa)) is receptor-binding lectin domain. Residues 65–66 (AN), 110–111 (DT), and 138–141 (STQG) contribute to the a carbohydrate site. Cysteines 75 and 132 form a disulfide. A fimbrillin-binding domain region spans residues 200–343 (TSCRLLTPSA…GISTFTFSYQ (144 aa)). Residues 287 to 307 (LKFGPDSPVKGNENQWQLSTG) form a disordered region. Polar residues predominate over residues 298-307 (NENQWQLSTG).

Belongs to the fimbrial protein family.

The protein localises to the fimbrium. In terms of biological role, essential fimbrial adhesion factor that mediates binding to N-acetylglucosamine-containing receptors in the host intestinal microvilli, leading to colonization of the intestinal tissue, and diarrhea or septicemia. Also confers adhesiveness to laminin and basement membranes. The polypeptide is F17b-G fimbrial adhesin (f17bG) (Escherichia coli).